A 406-amino-acid chain; its full sequence is 2,3-bisphosphoglycerate-independent phosphoglycerate mutase (406 aa).

The protein belongs to the BPG-independent phosphoglycerate mutase family. A-PGAM subfamily.

It catalyses the reaction (2R)-2-phosphoglycerate = (2R)-3-phosphoglycerate. It participates in carbohydrate degradation; glycolysis; pyruvate from D-glyceraldehyde 3-phosphate: step 3/5. Catalyzes the interconversion of 2-phosphoglycerate and 3-phosphoglycerate. The chain is 2,3-bisphosphoglycerate-independent phosphoglycerate mutase from Methanococcus maripaludis (strain C7 / ATCC BAA-1331).